Consider the following 57-residue polypeptide: Large ribosomal subunit protein bL32c (57 aa).

It belongs to the bacterial ribosomal protein bL32 family.

Its subcellular location is the plastid. It is found in the chloroplast. The chain is Large ribosomal subunit protein bL32c from Nandina domestica (Heavenly bamboo).